A 498-amino-acid chain; its full sequence is Membrane-bound lytic murein transglycosylase F (498 aa).

The signal sequence occupies residues 1–29 (MFFKPDFRPRCAKWLIATGLFLMLGACVE). Residues 30–267 (KPTTLERVKE…RLKDRYYGHV (238 aa)) are non-LT domain. Positions 268 to 498 (DVLGYVGAYT…SSSSTDESPL (231 aa)) are LT domain. Glutamate 314 is an active-site residue. Positions 464 to 498 (VADGNLHVPGVDKTQPPVPPASPVPSSSSTDESPL) are disordered.

It in the N-terminal section; belongs to the bacterial solute-binding protein 3 family. This sequence in the C-terminal section; belongs to the transglycosylase Slt family.

The protein resides in the cell outer membrane. The catalysed reaction is Exolytic cleavage of the (1-&gt;4)-beta-glycosidic linkage between N-acetylmuramic acid (MurNAc) and N-acetylglucosamine (GlcNAc) residues in peptidoglycan, from either the reducing or the non-reducing ends of the peptidoglycan chains, with concomitant formation of a 1,6-anhydrobond in the MurNAc residue.. Its function is as follows. Murein-degrading enzyme that degrades murein glycan strands and insoluble, high-molecular weight murein sacculi, with the concomitant formation of a 1,6-anhydromuramoyl product. Lytic transglycosylases (LTs) play an integral role in the metabolism of the peptidoglycan (PG) sacculus. Their lytic action creates space within the PG sacculus to allow for its expansion as well as for the insertion of various structures such as secretion systems and flagella. The chain is Membrane-bound lytic murein transglycosylase F from Pseudomonas syringae pv. syringae (strain B728a).